Here is a 42-residue protein sequence, read N- to C-terminus: Photosystem II reaction center protein J (42 aa).

A helical transmembrane segment spans residues 10-30 (IPLWLVATVAGLAVIALLGVF).

The protein belongs to the PsbJ family. As to quaternary structure, PSII is composed of 1 copy each of membrane proteins PsbA, PsbB, PsbC, PsbD, PsbE, PsbF, PsbH, PsbI, PsbJ, PsbK, PsbL, PsbM, PsbT, PsbX, PsbY, PsbZ, Psb30/Ycf12, at least 3 peripheral proteins of the oxygen-evolving complex and a large number of cofactors. It forms dimeric complexes.

It localises to the plastid. It is found in the chloroplast thylakoid membrane. In terms of biological role, one of the components of the core complex of photosystem II (PSII). PSII is a light-driven water:plastoquinone oxidoreductase that uses light energy to abstract electrons from H(2)O, generating O(2) and a proton gradient subsequently used for ATP formation. It consists of a core antenna complex that captures photons, and an electron transfer chain that converts photonic excitation into a charge separation. The protein is Photosystem II reaction center protein J of Chlorokybus atmophyticus (Soil alga).